Here is a 729-residue protein sequence, read N- to C-terminus: Cellulose synthase-like protein E1 (729 aa).

2 consecutive transmembrane segments (helical) span residues 29–49 (VIAYRFFSASVFVCICLIWFY) and 64–84 (LIWFVMFIVEIWFGLYWVVTQ). Catalysis depends on residues aspartate 152 and aspartate 443. Helical transmembrane passes span 526 to 546 (LPVLIYSVLTSLCLFKGIPLF), 553 to 573 (WFIPFGYVTVAATAYSLAEFL), 644 to 664 (MFLVLGTLGMLNLFCFAAAVA), 680 to 700 (QFVITGVLVVINWPLYKGMLL), and 709 to 729 (MSVTVKSVVLALSACTCLAFL).

The protein belongs to the glycosyltransferase 2 family. Plant cellulose synthase-like E subfamily.

The protein resides in the golgi apparatus membrane. Its function is as follows. Thought to be a Golgi-localized beta-glycan synthase that polymerize the backbones of noncellulosic polysaccharides (hemicelluloses) of plant cell wall. The protein is Cellulose synthase-like protein E1 (CSLE1) of Arabidopsis thaliana (Mouse-ear cress).